The primary structure comprises 266 residues: L-aspartate dehydrogenase (266 aa).

NAD(+) contacts are provided by Ala-123 and Asn-189. The active site involves His-219.

The protein belongs to the L-aspartate dehydrogenase family.

The enzyme catalyses L-aspartate + NADP(+) + H2O = oxaloacetate + NH4(+) + NADPH + H(+). The catalysed reaction is L-aspartate + NAD(+) + H2O = oxaloacetate + NH4(+) + NADH + H(+). It functions in the pathway cofactor biosynthesis; NAD(+) biosynthesis; iminoaspartate from L-aspartate (dehydrogenase route): step 1/1. Functionally, specifically catalyzes the NAD or NADP-dependent dehydrogenation of L-aspartate to iminoaspartate. The polypeptide is L-aspartate dehydrogenase (Cupriavidus taiwanensis (strain DSM 17343 / BCRC 17206 / CCUG 44338 / CIP 107171 / LMG 19424 / R1) (Ralstonia taiwanensis (strain LMG 19424))).